A 419-amino-acid chain; its full sequence is Gamma-glutamyl phosphate reductase (419 aa).

Belongs to the gamma-glutamyl phosphate reductase family.

It localises to the cytoplasm. The enzyme catalyses L-glutamate 5-semialdehyde + phosphate + NADP(+) = L-glutamyl 5-phosphate + NADPH + H(+). Its pathway is amino-acid biosynthesis; L-proline biosynthesis; L-glutamate 5-semialdehyde from L-glutamate: step 2/2. Catalyzes the NADPH-dependent reduction of L-glutamate 5-phosphate into L-glutamate 5-semialdehyde and phosphate. The product spontaneously undergoes cyclization to form 1-pyrroline-5-carboxylate. This chain is Gamma-glutamyl phosphate reductase, found in Ruthia magnifica subsp. Calyptogena magnifica.